The sequence spans 100 residues: Large ribosomal subunit protein uL23 (100 aa).

The protein belongs to the universal ribosomal protein uL23 family. As to quaternary structure, part of the 50S ribosomal subunit. Contacts protein L29, and trigger factor when it is bound to the ribosome.

Its function is as follows. One of the early assembly proteins it binds 23S rRNA. One of the proteins that surrounds the polypeptide exit tunnel on the outside of the ribosome. Forms the main docking site for trigger factor binding to the ribosome. The polypeptide is Large ribosomal subunit protein uL23 (Synechococcus sp. (strain CC9311)).